We begin with the raw amino-acid sequence, 656 residues long: Receptor-type tyrosine-protein phosphatase R (656 aa).

An N-terminal signal peptide occupies residues 1–23 (MRRAVGFPALCLLLNLHAAGCFS). An O-linked (Xyl...) (chondroitin sulfate) serine glycan is attached at Ser23. At 25-225 (NNDHFLAIRQ…HEADKIWSKE (201 aa)) the chain is on the extracellular side. The N-linked (GlcNAc...) asparagine glycan is linked to Asn128. The chain crosses the membrane as a helical span at residues 226-248 (GFYAVVIFLSIFIIIVTCLMIIY). The Cytoplasmic portion of the chain corresponds to 249-656 (RLKERLQLSF…ESRLSPETVQ (408 aa)). Ser271 is modified (phosphoserine). Ser338 is subject to Phosphoserine; by PKA. One can recognise a Tyrosine-protein phosphatase domain in the interval 392-646 (LQSEFMEIPM…EFVHHALCLF (255 aa)). Residues Asp553, 587 to 593 (CSAGIGR), and Gln631 contribute to the substrate site. Cys587 (phosphocysteine intermediate) is an active-site residue.

The protein belongs to the protein-tyrosine phosphatase family. Receptor class 7 subfamily. In terms of assembly, interacts with MAPKs. In terms of tissue distribution, widely expressed in the brain, most abundant in cerebellum, midbrain, cerebral cortex and hippocampus. Also expressed in heart and skeletal muscle.

The protein localises to the cytoplasm. It localises to the cell membrane. It carries out the reaction O-phospho-L-tyrosyl-[protein] + H2O = L-tyrosyl-[protein] + phosphate. Sequesters mitogen-activated protein kinases (MAPKs) such as MAPK1, MAPK3 and MAPK14 in the cytoplasm in an inactive form. The MAPKs bind to a dephosphorylated kinase interacting motif, phosphorylation of which by the protein kinase A complex releases the MAPKs for activation and translocation into the nucleus. The chain is Receptor-type tyrosine-protein phosphatase R (Ptprr) from Rattus norvegicus (Rat).